A 709-amino-acid polypeptide reads, in one-letter code: Protein transport protein SEC39 (709 aa).

This sequence belongs to the SEC39 family. As to quaternary structure, component of a peripheral membrane protein complex consisting of DSL1, SEC39/DSL3 and TIP20. Bound to a SNARE complex consisting of UFE1, USE1, SEC20 and SEC22 or YKT6 through direct interaction of TIP20 with SEC20. Interacts with TIP20 and DSL1.

It localises to the endoplasmic reticulum membrane. Functionally, required for protein transport between the Golgi and the endoplasmic reticulum. May contribute to tethering of coatomer-coated retrograde transport vesicles to the ER membrane through interaction with and stabilization of the SNARE complex. The sequence is that of Protein transport protein SEC39 from Saccharomyces cerevisiae (strain ATCC 204508 / S288c) (Baker's yeast).